A 252-amino-acid chain; its full sequence is tRNA (guanine-N(1)-)-methyltransferase (252 aa).

Residues G113 and 133–138 (IGDYVL) each bind S-adenosyl-L-methionine.

This sequence belongs to the RNA methyltransferase TrmD family. Homodimer.

The protein resides in the cytoplasm. It carries out the reaction guanosine(37) in tRNA + S-adenosyl-L-methionine = N(1)-methylguanosine(37) in tRNA + S-adenosyl-L-homocysteine + H(+). In terms of biological role, specifically methylates guanosine-37 in various tRNAs. The chain is tRNA (guanine-N(1)-)-methyltransferase from Nitrosococcus oceani (strain ATCC 19707 / BCRC 17464 / JCM 30415 / NCIMB 11848 / C-107).